Here is a 263-residue protein sequence, read N- to C-terminus: Alpha-tubulin N-acetyltransferase 2 (263 aa).

The 181-residue stretch at 1–181 (MEIAFDLSTI…NKYALCSNFF (181 aa)) folds into the N-acetyltransferase domain. Residue 115-128 (FFVVPTEQRSGNGF) coordinates acetyl-CoA. Disordered regions lie at residues 191–223 (TPRQ…NRPR) and 242–263 (EVDP…RRIW). Residues 200 to 212 (RASSAVSSHASSR) show a composition bias toward low complexity. Positions 253–263 (NARDFGHRRIW) are enriched in basic and acidic residues.

The protein belongs to the acetyltransferase ATAT1 family. As to expression, expressed in touch receptor neurons and in a subset of ciliated neurons, including PDE, ADE, CEP, and OLQ neurons.

It carries out the reaction L-lysyl-[alpha-tubulin] + acetyl-CoA = N(6)-acetyl-L-lysyl-[alpha-tubulin] + CoA + H(+). Specifically acetylates 'Lys-40' in alpha-tubulin/mec-12 on the lumenal side of microtubules. Promotes microtubule destabilization and accelerates microtubule dynamics; this activity may be independent of acetylation activity. Acetylates alpha-tubulin with a slow enzymatic rate, due to a catalytic site that is not optimized for acetyl transfer. Enters the microtubule through each end and diffuses quickly throughout the lumen of microtubules. Acetylates only long/old microtubules because of its slow acetylation rate since it does not have time to act on dynamically unstable microtubules before the enzyme is released. Required for the maintenance of touch receptor neurons and possibly other type of neurons involved in locomotion. In Caenorhabditis elegans, this protein is Alpha-tubulin N-acetyltransferase 2 (atat-2).